Here is a 516-residue protein sequence, read N- to C-terminus: tRNA-guanine(15) transglycosylase (516 aa).

The Nucleophile role is filled by Asp93. Residues Asp128 and Ala196 each contribute to the substrate site. Zn(2+)-binding residues include Cys279, Cys281, and Cys284. Positions Leu488–Gly502 are enriched in low complexity. Residues Leu488–Glu516 are disordered.

It belongs to the archaeosine tRNA-ribosyltransferase family. It depends on Zn(2+) as a cofactor.

The enzyme catalyses guanosine(15) in tRNA + 7-cyano-7-deazaguanine = 7-cyano-7-carbaguanosine(15) in tRNA + guanine. Its pathway is tRNA modification; archaeosine-tRNA biosynthesis. Its function is as follows. Exchanges the guanine residue with 7-cyano-7-deazaguanine (preQ0) at position 15 in the dihydrouridine loop (D-loop) of archaeal tRNAs. The protein is tRNA-guanine(15) transglycosylase of Haloferax volcanii (strain ATCC 29605 / DSM 3757 / JCM 8879 / NBRC 14742 / NCIMB 2012 / VKM B-1768 / DS2) (Halobacterium volcanii).